A 67-amino-acid polypeptide reads, in one-letter code: Large ribosomal subunit protein bL35 (67 aa).

A compositionally biased stretch (basic residues) spans methionine 1–valine 16. Residues methionine 1–arginine 24 are disordered.

Belongs to the bacterial ribosomal protein bL35 family.

The polypeptide is Large ribosomal subunit protein bL35 (Delftia acidovorans (strain DSM 14801 / SPH-1)).